Consider the following 87-residue polypeptide: MAGKSSGDRRKLLRGAKVGKNAAPAKSIRVGVIDYKDVATLRKFISERGKIRARRITGVSVQEQRLIARAVKNAREMALLPYAGSGR.

The span at Met-1–Arg-10 shows a compositional bias: basic and acidic residues. The tract at residues Met-1–Ala-23 is disordered.

Belongs to the bacterial ribosomal protein bS18 family. As to quaternary structure, part of the 30S ribosomal subunit. Forms a tight heterodimer with protein bS6.

In terms of biological role, binds as a heterodimer with protein bS6 to the central domain of the 16S rRNA, where it helps stabilize the platform of the 30S subunit. The protein is Small ribosomal subunit protein bS18 of Clavibacter sepedonicus (Clavibacter michiganensis subsp. sepedonicus).